Here is a 357-residue protein sequence, read N- to C-terminus: Isopentenyl-diphosphate delta-isomerase (357 aa).

12–13 (RK) is a substrate binding site. FMN-binding positions include Ser-70, 71 to 73 (SMT), Ser-101, and Asn-130. 101–103 (SMR) is a binding site for substrate. Gln-165 is a binding site for substrate. Glu-166 provides a ligand contact to Mg(2+). FMN is bound by residues Lys-197, 289–291 (GIR), and 310–311 (AQ).

It belongs to the IPP isomerase type 2 family. In terms of assembly, homooctamer. Dimer of tetramers. FMN serves as cofactor. The cofactor is NADPH. Requires Mg(2+) as cofactor.

The protein localises to the cytoplasm. The enzyme catalyses isopentenyl diphosphate = dimethylallyl diphosphate. Functionally, involved in the biosynthesis of isoprenoids. Catalyzes the 1,3-allylic rearrangement of the homoallylic substrate isopentenyl (IPP) to its allylic isomer, dimethylallyl diphosphate (DMAPP). This chain is Isopentenyl-diphosphate delta-isomerase, found in Chlorobaculum parvum (strain DSM 263 / NCIMB 8327) (Chlorobium vibrioforme subsp. thiosulfatophilum).